The primary structure comprises 308 residues: Barttin (308 aa).

The Cytoplasmic portion of the chain corresponds to 1 to 5; the sequence is MADEK. The interval 1–72 is regulates channel membrane trafficking and anion conductance; that stretch reads MADEKTFRIG…VPADSDFQGM (72 aa). A helical membrane pass occupies residues 6-26; sequence TFRIGFIVLGLFLLSLGTFLM. The Extracellular segment spans residues 27–32; sequence SHDRPQ. Residues 33-53 form a helical membrane-spanning segment; sequence VYGTFYAMGSIMVIGGVLWSM. Residues cysteine 54 and cysteine 56 are each lipidated (S-palmitoyl cysteine). Topologically, residues 54 to 308 are cytoplasmic; the sequence is CQCYPKITFV…ELGFEPDVQG (255 aa). Phosphoserine is present on residues serine 79 and serine 107. Disordered regions lie at residues 127–149 and 162–308; these read PLLA…HSAQ and LDEK…DVQG. A compositionally biased stretch (basic and acidic residues) spans 162 to 171; the sequence is LDEKEGEKSR. A compositionally biased stretch (polar residues) spans 172 to 183; that stretch reads SQSSPPACSQGS. Over residues 274 to 283 the composition is skewed to acidic residues; that stretch reads EEPEQEEEDL. A Phosphoserine modification is found at serine 290.

As to quaternary structure, interacts with CLCNK channels. Forms heteromers with CLCNKA in the thin ascending limb of Henle and with CLCNKB in the thick ascending limb and more distal segments. Post-translationally, palmitoylation is necessary for activation of plasma membrane-inserted CLC-K/barttin channels. In terms of tissue distribution, expressed along the distal nephron.

Its subcellular location is the basolateral cell membrane. In terms of biological role, regulatory subunit of anion-selective CLCNKA:BSND and CLCNKB:BSND heteromeric channels involved in basolateral chloride conductance along the nephron to achieve urine concentration and maintain systemic acid-base homeostasis, and in the stria vascularis of the inner ear to establish the endocochlear potential necessary for normal hearing. Most likely acts as a chaperone that allosterically regulates proper sorting of CLCNKA:BSND and CLCNKB:BSND channels at the basolateral plasma membrane domain and functional switch to ion conducting state. Mediates constitutive opening of channel common gates. The sequence is that of Barttin from Rattus norvegicus (Rat).